The sequence spans 513 residues: ATP synthase subunit alpha (513 aa).

169 to 176 (GDRQTGKT) is a binding site for ATP.

Belongs to the ATPase alpha/beta chains family. F-type ATPases have 2 components, CF(1) - the catalytic core - and CF(0) - the membrane proton channel. CF(1) has five subunits: alpha(3), beta(3), gamma(1), delta(1), epsilon(1). CF(0) has three main subunits: a(1), b(2) and c(9-12). The alpha and beta chains form an alternating ring which encloses part of the gamma chain. CF(1) is attached to CF(0) by a central stalk formed by the gamma and epsilon chains, while a peripheral stalk is formed by the delta and b chains.

It localises to the cell inner membrane. The enzyme catalyses ATP + H2O + 4 H(+)(in) = ADP + phosphate + 5 H(+)(out). Functionally, produces ATP from ADP in the presence of a proton gradient across the membrane. The alpha chain is a regulatory subunit. The sequence is that of ATP synthase subunit alpha from Klebsiella pneumoniae subsp. pneumoniae (strain ATCC 700721 / MGH 78578).